A 374-amino-acid polypeptide reads, in one-letter code: Anhydro-N-acetylmuramic acid kinase (374 aa).

9 to 16 (GTSLDGID) serves as a coordination point for ATP.

Belongs to the anhydro-N-acetylmuramic acid kinase family.

The catalysed reaction is 1,6-anhydro-N-acetyl-beta-muramate + ATP + H2O = N-acetyl-D-muramate 6-phosphate + ADP + H(+). Its pathway is amino-sugar metabolism; 1,6-anhydro-N-acetylmuramate degradation. It participates in cell wall biogenesis; peptidoglycan recycling. Its function is as follows. Catalyzes the specific phosphorylation of 1,6-anhydro-N-acetylmuramic acid (anhMurNAc) with the simultaneous cleavage of the 1,6-anhydro ring, generating MurNAc-6-P. Is required for the utilization of anhMurNAc either imported from the medium or derived from its own cell wall murein, and thus plays a role in cell wall recycling. The chain is Anhydro-N-acetylmuramic acid kinase from Methylobacterium nodulans (strain LMG 21967 / CNCM I-2342 / ORS 2060).